The primary structure comprises 910 residues: Coatomer subunit beta'-2 (910 aa).

9 WD repeats span residues 13–52 (QRSERVKSVDLHPTEPWILSSLYSGSVCIWNYQTQTMVKS), 55–94 (VTELPVRSSKFIARKQWIVAGADDMFIRVYNYNTMDKVKV), 97–136 (AHTDYIRCVAVHPTQPFVLSSSDDMLIKLWDWDKGWMCTQ), 140–180 (GHSH…PNFT), 183–224 (GHSK…CVQT), 227–266 (GHAHNVSAVCFHPELPITLTGSEDGTVRLWHSTTYRLENT), 269–309 (YGLE…ASMD), 351–393 (TCDL…GSAL), and 461–501 (RIDV…SHLD). The tract at residues 882 to 910 (ADGSTDGAVLVNGNDTEEQWGTNNEESSA) is disordered. Positions 900–910 (QWGTNNEESSA) are enriched in polar residues.

Belongs to the WD repeat COPB2 family. In terms of assembly, oligomeric complex that consists of at least the alpha, beta, beta', gamma, delta, epsilon and zeta subunits.

The protein localises to the cytoplasm. Its subcellular location is the golgi apparatus membrane. It is found in the cytoplasmic vesicle. It localises to the COPI-coated vesicle membrane. In terms of biological role, the coatomer is a cytosolic protein complex that binds to dilysine motifs and reversibly associates with Golgi non-clathrin-coated vesicles, which further mediate biosynthetic protein transport from the ER, via the Golgi up to the trans Golgi network. Coatomer complex is required for budding from Golgi membranes, and is essential for the retrograde Golgi-to-ER transport of dilysine-tagged proteins. The protein is Coatomer subunit beta'-2 of Oryza sativa subsp. japonica (Rice).